Reading from the N-terminus, the 914-residue chain is Scaffold attachment factor B1 (914 aa).

The segment covering 1-24 (MAETLSGLGDSGAAGAAALSSASS) has biased composition (low complexity). Residues 1–33 (MAETLSGLGDSGAAGAAALSSASSETGTRRLSD) are disordered. Ala2 bears the N-acetylalanine mark. Phosphoserine occurs at positions 24 and 55. Residues 31 to 65 (LSDLRVIDLRAELRKRNVDSSGNKSVLMERLKKAI) enclose the SAP domain. The disordered stretch occupies residues 64 to 117 (AIEDEGGNPDEIEITSEGNKKTSKRSSKGRKPEEEGVEDNGLEENSGDGQEDVE). Residues 67-77 (DEGGNPDEIEI) show a composition bias toward acidic residues. Ser79 carries the phosphoserine modification. Over residues 98–117 (EGVEDNGLEENSGDGQEDVE) the composition is skewed to acidic residues. Residues Lys172 and Lys186 each participate in a glycyl lysine isopeptide (Lys-Gly) (interchain with G-Cter in SUMO2) cross-link. A Phosphothreonine modification is found at Thr188. 3 positions are modified to phosphoserine: Ser195, Ser197, and Ser209. The tract at residues 221–407 (LGETCKSEPV…EKGRSSCGRN (187 aa)) is disordered. Residues 225–234 (CKSEPVKEES) show a composition bias toward basic and acidic residues. A Glycyl lysine isopeptide (Lys-Gly) (interchain with G-Cter in SUMO) cross-link involves residue Lys231. The segment covering 275–286 (SESTAHAQSSKA) has biased composition (polar residues). Over residues 293 to 309 (VKREPAEQPGDGERTDC) the composition is skewed to basic and acidic residues. Lys294 is covalently cross-linked (Glycyl lysine isopeptide (Lys-Gly) (interchain with G-Cter in SUMO)). Residues 319 to 330 (EQSSAASELAEA) are compositionally biased toward low complexity. Residues 346-359 (EARDSKEDGRKFDF) are compositionally biased toward basic and acidic residues. The segment covering 371–383 (ESSTSEGADQKMS) has biased composition (polar residues). Lys381 is covalently cross-linked (Glycyl lysine isopeptide (Lys-Gly) (interchain with G-Cter in SUMO2)). 2 positions are modified to phosphoserine: Ser383 and Ser384. Residues 390 to 401 (DTKRLSKEEKGR) show a composition bias toward basic and acidic residues. Lys392 participates in a covalent cross-link: Glycyl lysine isopeptide (Lys-Gly) (interchain with G-Cter in SUMO2). One can recognise an RRM domain in the interval 406–484 (RNFWVSGLSS…KMISVEKAKN (79 aa)). Ser415 bears the Phosphoserine mark. Basic and acidic residues-rich tracts occupy residues 477–551 (ISVE…ERSR) and 559–570 (GTERTVVMDKSK). Disordered regions lie at residues 477-636 (ISVE…QAQW), 670-706 (RERM…QERR), and 748-914 (FDHR…TRRY). Residues Lys483, Lys514, Lys543, and Lys570 each participate in a glycyl lysine isopeptide (Lys-Gly) (interchain with G-Cter in SUMO2) cross-link. The tract at residues 528–791 (GDDGSGEKSK…RHGGPERHGR (264 aa)) is interaction with POLR2A; SFRS1; SFRS9 and SFRS10. A Glycyl lysine isopeptide (Lys-Gly) (interchain with G-Cter in SUMO1); alternate cross-link involves residue Lys578. Lys578 participates in a covalent cross-link: Glycyl lysine isopeptide (Lys-Gly) (interchain with G-Cter in SUMO2); alternate. Phosphoserine is present on residues Ser580, Ser582, Ser601, and Ser604. Positions 581–636 (GSKERASKSLDRKSASREKRSVVSFDKVKEPRKSRDSESHRVRERSEREQRMQAQW) are enriched in basic and acidic residues. Positions 599–616 (KRSVVSFDKVKEPRKSRD) match the Nuclear localization signal motif. An interaction with SAFB2 region spans residues 599–914 (KRSVVSFDKV…PSDARFTRRY (316 aa)). Residue Lys607 is modified to N6-acetyllysine. Over residues 748–795 (FDHRDRGRYPDHSVDRREGSRSMMGEREGQHYPERHGGPERHGRDSRD) the composition is skewed to basic and acidic residues. Omega-N-methylarginine is present on Arg810. 2 stretches are compositionally biased toward basic and acidic residues: residues 816-831 (PRRD…DDRA) and 840-850 (MMDRDHKRWQG). A Glycyl lysine isopeptide (Lys-Gly) (interchain with G-Cter in SUMO2) cross-link involves residue Lys846. 3 positions are modified to asymmetric dimethylarginine: Arg867, Arg873, and Arg883. Gly residues predominate over residues 891-900 (GMQGGFGGQS). A compositionally biased stretch (basic and acidic residues) spans 904 to 914 (RPSDARFTRRY).

Monomer and homodimer. Interacts with KHDRBS3. Interacts with CLK2. Interacts with POLR2A, ASF/SRSF1, SRp30c/SRFS9 and TRA2B/SFRS10. Interacts with SRPK1 and inhibits its activity. Interacts with RBMX. Interacts with FUS. Interacts with ZBED4. Post-translationally, sumoylated by PIAS1 with SUMO1 and SUMO2/3, desumoylated by SENP1. Sumoylation is required for transcriptional repressor activity.

It localises to the nucleus. Functionally, binds to scaffold/matrix attachment region (S/MAR) DNA and forms a molecular assembly point to allow the formation of a 'transcriptosomal' complex (consisting of SR proteins and RNA polymerase II) coupling transcription and RNA processing. Functions as an estrogen receptor corepressor and can also bind to the HSP27 promoter and decrease its transcription. Thereby acts as a negative regulator of cell proliferation. When associated with RBMX, binds to and stimulates transcription from the SREBF1 promoter. This chain is Scaffold attachment factor B1 (SAFB), found in Pongo abelii (Sumatran orangutan).